The chain runs to 190 residues: Signal peptidase complex subunit 3 (190 aa).

The Cytoplasmic segment spans residues 1-9 (MFNIVTRFQ). Residues 10–32 (YAANQALTSSIIIAGIVIVSSLL) traverse the membrane as a helical; Signal-anchor for type II membrane protein segment. The Lumenal portion of the chain corresponds to 33–190 (QLYSNNAWSL…EYVDKKKEQK (158 aa)).

The protein belongs to the SPCS3 family. As to quaternary structure, component of the signal peptidase complex (SPC) composed of a catalytic subunit SEC11 and three accessory subunits SPC1, SPC2 and SPC3. The complex induces a local thinning of the ER membrane which is used to measure the length of the signal peptide (SP) h-region of protein substrates. This ensures the selectivity of the complex towards h-regions shorter than 18-20 amino acids. SPC associates with the translocon complex.

The protein localises to the endoplasmic reticulum membrane. Functionally, essential component of the signal peptidase complex (SPC) which catalyzes the cleavage of N-terminal signal sequences from nascent proteins as they are translocated into the lumen of the endoplasmic reticulum. Essential for the SPC catalytic activity, possibly by stabilizing and positioning the active center of the complex close to the lumenal surface. Essential for viability. In Debaryomyces hansenii (strain ATCC 36239 / CBS 767 / BCRC 21394 / JCM 1990 / NBRC 0083 / IGC 2968) (Yeast), this protein is Signal peptidase complex subunit 3 (SPC3).